The primary structure comprises 463 residues: Bifunctional protein HldE (463 aa).

The interval 1 to 315 (MKKILVIGDL…LILNQTHPKI (315 aa)) is ribokinase. ATP is bound at residue 191-194 (NRAE). Aspartate 260 is an active-site residue. Residues 334–463 (FTNGCFDILH…IEKIKRTHND (130 aa)) form a cytidylyltransferase region.

This sequence in the N-terminal section; belongs to the carbohydrate kinase PfkB family. In the C-terminal section; belongs to the cytidylyltransferase family. In terms of assembly, homodimer.

It catalyses the reaction D-glycero-beta-D-manno-heptose 7-phosphate + ATP = D-glycero-beta-D-manno-heptose 1,7-bisphosphate + ADP + H(+). It carries out the reaction D-glycero-beta-D-manno-heptose 1-phosphate + ATP + H(+) = ADP-D-glycero-beta-D-manno-heptose + diphosphate. The protein operates within nucleotide-sugar biosynthesis; ADP-L-glycero-beta-D-manno-heptose biosynthesis; ADP-L-glycero-beta-D-manno-heptose from D-glycero-beta-D-manno-heptose 7-phosphate: step 1/4. It functions in the pathway nucleotide-sugar biosynthesis; ADP-L-glycero-beta-D-manno-heptose biosynthesis; ADP-L-glycero-beta-D-manno-heptose from D-glycero-beta-D-manno-heptose 7-phosphate: step 3/4. Its pathway is bacterial outer membrane biogenesis; LPS core biosynthesis. In terms of biological role, catalyzes the phosphorylation of D-glycero-D-manno-heptose 7-phosphate at the C-1 position to selectively form D-glycero-beta-D-manno-heptose-1,7-bisphosphate. Its function is as follows. Catalyzes the ADP transfer from ATP to D-glycero-beta-D-manno-heptose 1-phosphate, yielding ADP-D-glycero-beta-D-manno-heptose. The chain is Bifunctional protein HldE from Helicobacter pylori (strain J99 / ATCC 700824) (Campylobacter pylori J99).